Here is a 115-residue protein sequence, read N- to C-terminus: Cholecystokinin (115 aa).

The N-terminal stretch at 1-20 is a signal peptide; it reads MKCGVCLCVVMAVLAAGALA. 2 consecutive propeptides follow at residues 21–45 and 47–63; these read QPVV…RQLR and VLRP…ALLA. The residue at position 97 (Y97) is a Sulfotyrosine. Position 103 is a phenylalanine amide (F103). Positions 107-115 are excised as a propeptide; sequence SAEDYEYPS. Sulfotyrosine occurs at positions 111 and 113.

Belongs to the gastrin/cholecystokinin family. Binds to CCK-A receptors in the pancreas and CCK-B receptors in the brain. In terms of processing, the precursor is cleaved by proteases to produce a number of active cholecystokinins. Post-translationally, sulfation of Tyr-97 is essential for receptor activation. As to expression, the shortest form (CCK8) is predominantly found in the brain, whereas the larger ones are found in the intestine.

It localises to the secreted. Its function is as follows. This peptide hormone induces gall bladder contraction and the release of pancreatic enzymes in the gut. Its function in the brain is not clear. Binding to CCK-A receptors stimulates amylase release from the pancreas, binding to CCK-B receptors stimulates gastric acid secretion. The protein is Cholecystokinin (Cck) of Rattus norvegicus (Rat).